Reading from the N-terminus, the 77-residue chain is Ribonuclease P protein component 1 (77 aa).

It belongs to the eukaryotic/archaeal RNase P protein component 1 family. In terms of assembly, consists of a catalytic RNA component and at least 4-5 protein subunits.

The protein resides in the cytoplasm. The catalysed reaction is Endonucleolytic cleavage of RNA, removing 5'-extranucleotides from tRNA precursor.. Its function is as follows. Part of ribonuclease P, a protein complex that generates mature tRNA molecules by cleaving their 5'-ends. The chain is Ribonuclease P protein component 1 from Sulfurisphaera tokodaii (strain DSM 16993 / JCM 10545 / NBRC 100140 / 7) (Sulfolobus tokodaii).